Consider the following 503-residue polypeptide: ATP synthase subunit alpha (503 aa).

169-176 (GDRSTGKT) contacts ATP.

This sequence belongs to the ATPase alpha/beta chains family. F-type ATPases have 2 components, CF(1) - the catalytic core - and CF(0) - the membrane proton channel. CF(1) has five subunits: alpha(3), beta(3), gamma(1), delta(1), epsilon(1). CF(0) has three main subunits: a(1), b(2) and c(9-12). The alpha and beta chains form an alternating ring which encloses part of the gamma chain. CF(1) is attached to CF(0) by a central stalk formed by the gamma and epsilon chains, while a peripheral stalk is formed by the delta and b chains.

The protein localises to the cell membrane. The catalysed reaction is ATP + H2O + 4 H(+)(in) = ADP + phosphate + 5 H(+)(out). Its function is as follows. Produces ATP from ADP in the presence of a proton gradient across the membrane. The alpha chain is a regulatory subunit. This Dehalococcoides mccartyi (strain ATCC BAA-2100 / JCM 16839 / KCTC 5957 / BAV1) protein is ATP synthase subunit alpha.